A 245-amino-acid chain; its full sequence is MNVTLLIPARYGSSRFPGKPLAPINGKPMIQHVYERASLAKGLTNIYVATDDDRIKAAVEGFGGKVVMTSPEAASGTDRINDAINQLGLKDDDLVINLQGDQPLIDPTSIEQVISLFERHPGEFEMATLGFEIVNKAELDDPMHVKMVFDNNNYALYFSRSRIPFGRDTQDYPVYKHLGVYAYTRKFVQAFAALPLGRLEDLEKLEQLRALEYGHKIKIAISAFDSIEVDTPEDIRKCEQRLAVD.

This sequence belongs to the KdsB family.

The protein resides in the cytoplasm. The enzyme catalyses 8-amino-3,8-dideoxy-alpha-D-manno-octulosonate + CTP = CMP-8-amino-3,8-dideoxy-alpha-D-manno-oct-2-ulosonate + diphosphate. It functions in the pathway bacterial outer membrane biogenesis; lipopolysaccharide biosynthesis. Activates KDO8N (a required 8-carbon sugar) for incorporation into bacterial lipopolysaccharide in the Shewanella genus. The polypeptide is 8-amino-3,8-dideoxy-manno-octulosonate cytidylyltransferase (Shewanella baltica (strain OS223)).